The sequence spans 1273 residues: Homeobox protein cut-like ceh-44 (1273 aa).

Coiled coils occupy residues L101 to K407 and R440 to D468. 3 DNA-binding regions (CUT) span residues N591–R681, Q832–K919, and I978–S1065. The tract at residues V1069–N1100 is disordered. A DNA-binding region (homeobox) is located at residues K1103 to E1162.

It belongs to the CUT homeobox family.

It localises to the nucleus. Functionally, probable DNA-binding regulatory protein involved in cell-fate specification. The protein is Homeobox protein cut-like ceh-44 of Caenorhabditis elegans.